The sequence spans 390 residues: Transforming growth factor beta-1 proprotein (390 aa).

The signal sequence occupies residues 1 to 29 (MPPSGLRLLPLLLPLLWLLVLTPSRPAAG). Positions 30 to 74 (LSTCKTIDMELVKRKRIETIRGQILSKLRLASPPSQGEVPPGPLP) are straightjacket domain. Residues 75–271 (EAVLALYNST…ATPLERAQHL (197 aa)) form an arm domain region. Residues Asn-82, Asn-136, and Asn-176 are each glycosylated (N-linked (GlcNAc...) asparagine). The interval 226 to 252 (DSKDNTLQVDINGFTTGRRGDLATIHG) is bowtie tail. Positions 244–246 (RGD) match the Cell attachment site motif. Disulfide bonds link Cys-285/Cys-294, Cys-293/Cys-356, Cys-322/Cys-387, and Cys-326/Cys-389.

The protein belongs to the TGF-beta family. As to quaternary structure, homodimer; disulfide-linked. Interacts with the serine proteases, HTRA1 and HTRA3: the interaction with either inhibits TGFB1-mediated signaling and the HTRA protease activity is required for this inhibition. May interact with THSD4; this interaction may lead to sequestration by FBN1 microfibril assembly and attenuation of TGFB signaling. Interacts with CD109, DPT and ASPN. Interacts with EFEMP2. Interacts with TSKU; the interaction contributes to regulation of the hair cycle. Interacts with TGFBR3. In terms of assembly, homodimer; disulfide-linked. Interacts with transforming growth factor beta-1 (TGF-beta-1) chain; interaction is non-covalent and maintains TGF-beta-1 in a latent state; each latency-associated peptide (LAP) monomer interacts with TGF-beta-1 in the other monomer. Interacts with LTBP1; leading to regulation of TGF-beta-1 activation. Interacts with LRRC32/GARP; leading to regulation of TGF-beta-1 activation on the surface of activated regulatory T-cells (Tregs). Interacts with LRRC33/NRROS; leading to regulation of TGF-beta-1 activation in macrophages and microglia. Interacts (via cell attachment site) with integrins ITGAV and ITGB6 (ITGAV:ITGB6), leading to release of the active TGF-beta-1. Interacts with NREP; the interaction results in a decrease in TGFB1 autoinduction. Interacts with HSP90AB1; inhibits latent TGFB1 activation. Homodimer; disulfide-linked. Interacts with TGF-beta receptors (TGFBR1 and TGFBR2), leading to signal transduction. Post-translationally, transforming growth factor beta-1 proprotein: The precursor proprotein is cleaved in the Golgi apparatus by FURIN to form Transforming growth factor beta-1 (TGF-beta-1) and Latency-associated peptide (LAP) chains, which remain non-covalently linked, rendering TGF-beta-1 inactive. N-glycosylated. Deglycosylation leads to activation of Transforming growth factor beta-1 (TGF-beta-1); mechanisms triggering deglycosylation-driven activation of TGF-beta-1 are however unclear.

It is found in the secreted. Its subcellular location is the extracellular space. The protein resides in the extracellular matrix. Its function is as follows. Transforming growth factor beta-1 proprotein: Precursor of the Latency-associated peptide (LAP) and Transforming growth factor beta-1 (TGF-beta-1) chains, which constitute the regulatory and active subunit of TGF-beta-1, respectively. Functionally, required to maintain the Transforming growth factor beta-1 (TGF-beta-1) chain in a latent state during storage in extracellular matrix. Associates non-covalently with TGF-beta-1 and regulates its activation via interaction with 'milieu molecules', such as LTBP1, LRRC32/GARP and LRRC33/NRROS, that control activation of TGF-beta-1. Interaction with LRRC33/NRROS regulates activation of TGF-beta-1 in macrophages and microglia. Interaction with LRRC32/GARP controls activation of TGF-beta-1 on the surface of activated regulatory T-cells (Tregs). Interaction with integrins (ITGAV:ITGB6 or ITGAV:ITGB8) results in distortion of the Latency-associated peptide chain and subsequent release of the active TGF-beta-1. Multifunctional protein that regulates the growth and differentiation of various cell types and is involved in various processes, such as normal development, immune function, microglia function and responses to neurodegeneration. Activation into mature form follows different steps: following cleavage of the proprotein in the Golgi apparatus, Latency-associated peptide (LAP) and Transforming growth factor beta-1 (TGF-beta-1) chains remain non-covalently linked rendering TGF-beta-1 inactive during storage in extracellular matrix. At the same time, LAP chain interacts with 'milieu molecules', such as LTBP1, LRRC32/GARP and LRRC33/NRROS that control activation of TGF-beta-1 and maintain it in a latent state during storage in extracellular milieus. TGF-beta-1 is released from LAP by integrins (ITGAV:ITGB6 or ITGAV:ITGB8): integrin-binding to LAP stabilizes an alternative conformation of the LAP bowtie tail and results in distortion of the LAP chain and subsequent release of the active TGF-beta-1. Once activated following release of LAP, TGF-beta-1 acts by binding to TGF-beta receptors (TGFBR1 and TGFBR2), which transduce signal. While expressed by many cells types, TGF-beta-1 only has a very localized range of action within cell environment thanks to fine regulation of its activation by Latency-associated peptide chain (LAP) and 'milieu molecules'. Plays an important role in bone remodeling: acts as a potent stimulator of osteoblastic bone formation, causing chemotaxis, proliferation and differentiation in committed osteoblasts. Can promote either T-helper 17 cells (Th17) or regulatory T-cells (Treg) lineage differentiation in a concentration-dependent manner. At high concentrations, leads to FOXP3-mediated suppression of RORC and down-regulation of IL-17 expression, favoring Treg cell development. At low concentrations in concert with IL-6 and IL-21, leads to expression of the IL-17 and IL-23 receptors, favoring differentiation to Th17 cells. Stimulates sustained production of collagen through the activation of CREB3L1 by regulated intramembrane proteolysis (RIP). Mediates SMAD2/3 activation by inducing its phosphorylation and subsequent translocation to the nucleus. Positively regulates odontoblastic differentiation in dental papilla cells, via promotion of IPO7-mediated translocation of phosphorylated SMAD2 to the nucleus and subsequent transcription of target genes. Can induce epithelial-to-mesenchymal transition (EMT) and cell migration in various cell types. The protein is Transforming growth factor beta-1 proprotein (TGFB1) of Chlorocebus aethiops (Green monkey).